An 84-amino-acid polypeptide reads, in one-letter code: ATP synthase subunit c (84 aa).

2 helical membrane passes run 13–33 and 56–76; these read IAVG…WGLI and FIFA…GFWF.

Belongs to the ATPase C chain family. In terms of assembly, F-type ATPases have 2 components, F(1) - the catalytic core - and F(0) - the membrane proton channel. F(1) has five subunits: alpha(3), beta(3), gamma(1), delta(1), epsilon(1). F(0) has three main subunits: a(1), b(2) and c(10-14). The alpha and beta chains form an alternating ring which encloses part of the gamma chain. F(1) is attached to F(0) by a central stalk formed by the gamma and epsilon chains, while a peripheral stalk is formed by the delta and b chains.

Its subcellular location is the cell inner membrane. Its function is as follows. F(1)F(0) ATP synthase produces ATP from ADP in the presence of a proton or sodium gradient. F-type ATPases consist of two structural domains, F(1) containing the extramembraneous catalytic core and F(0) containing the membrane proton channel, linked together by a central stalk and a peripheral stalk. During catalysis, ATP synthesis in the catalytic domain of F(1) is coupled via a rotary mechanism of the central stalk subunits to proton translocation. Functionally, key component of the F(0) channel; it plays a direct role in translocation across the membrane. A homomeric c-ring of between 10-14 subunits forms the central stalk rotor element with the F(1) delta and epsilon subunits. The chain is ATP synthase subunit c from Acidithiobacillus ferrooxidans (strain ATCC 23270 / DSM 14882 / CIP 104768 / NCIMB 8455) (Ferrobacillus ferrooxidans (strain ATCC 23270)).